Here is a 355-residue protein sequence, read N- to C-terminus: N-acetyl-gamma-glutamyl-phosphate reductase (355 aa).

The active site involves C152.

The protein belongs to the NAGSA dehydrogenase family. Type 1 subfamily.

The protein localises to the cytoplasm. The catalysed reaction is N-acetyl-L-glutamate 5-semialdehyde + phosphate + NADP(+) = N-acetyl-L-glutamyl 5-phosphate + NADPH + H(+). It participates in amino-acid biosynthesis; L-arginine biosynthesis; N(2)-acetyl-L-ornithine from L-glutamate: step 3/4. Functionally, catalyzes the NADPH-dependent reduction of N-acetyl-5-glutamyl phosphate to yield N-acetyl-L-glutamate 5-semialdehyde. The sequence is that of N-acetyl-gamma-glutamyl-phosphate reductase from Psychrobacter cryohalolentis (strain ATCC BAA-1226 / DSM 17306 / VKM B-2378 / K5).